A 193-amino-acid chain; its full sequence is Bradykinin-potentiating and C-type natriuretic peptides (193 aa).

An N-terminal signal peptide occupies residues 1–23; that stretch reads MFVSRLAASGLLLLALLALSLDG. The propeptide occupies 24–27; the sequence is KPVH. The segment at 25–173 is disordered; the sequence is PVHQSKPGRS…RMKGLAKKAM (149 aa). Gln-28 bears the Pyrrolidone carboxylic acid mark. 2 propeptides span residues 40–43 and 58–64; these read LSAQ and LSVQQWS. Residue Gln-65 is modified to Pyrrolidone carboxylic acid. Residues 75–169 constitute a propeptide that is removed on maturation; sequence VVVQPHESPA…GGARRMKGLA (95 aa). Low complexity predominate over residues 95-123; sequence SPGPEAASGPAAPHRLPKSKGASATSAAS. Residues 125-150 show a composition bias toward basic and acidic residues; that stretch reads PMRDLRTDGKQERQKWGRMVQPDHHA. The segment covering 152-162 has biased composition (gly residues); sequence PGGGGGGGGGA. Over residues 163–173 the composition is skewed to basic residues; that stretch reads RRMKGLAKKAM. Cys-177 and Cys-193 are disulfide-bonded.

It in the N-terminal section; belongs to the bradykinin-potentiating peptide family. The protein in the C-terminal section; belongs to the natriuretic peptide family. Expressed by the venom gland.

The protein resides in the secreted. Bradykinin-potentiating peptide both inhibits the activity of the angiotensin-converting enzyme (ACE) and enhances the action of bradykinin by inhibiting the peptidases that inactivate it. It acts as an indirect hypotensive agent. Neither synthetic Tf1, nor synthetic Tf2 show bradykinin-potentiating effects. In terms of biological role, has a vasorelaxant activity in rat aortic strips and a diuretic potency in anesthetized rats. Its function is as follows. Has a vasorelaxant activity in rat aortic strips and a diuretic potency in anesthetized rats. Is as potent as Tf-CNP. This Protobothrops flavoviridis (Habu) protein is Bradykinin-potentiating and C-type natriuretic peptides.